The primary structure comprises 333 residues: Adenosine deaminase (333 aa).

Zn(2+) is bound by residues His-12 and His-14. 3 residues coordinate substrate: His-14, Asp-16, and Gly-170. His-197 contacts Zn(2+). Glu-200 serves as the catalytic Proton donor. Residue Asp-278 coordinates Zn(2+). Asp-279 is a binding site for substrate.

This sequence belongs to the metallo-dependent hydrolases superfamily. Adenosine and AMP deaminases family. Adenosine deaminase subfamily. It depends on Zn(2+) as a cofactor.

It carries out the reaction adenosine + H2O + H(+) = inosine + NH4(+). The enzyme catalyses 2'-deoxyadenosine + H2O + H(+) = 2'-deoxyinosine + NH4(+). In terms of biological role, catalyzes the hydrolytic deamination of adenosine and 2-deoxyadenosine. The polypeptide is Adenosine deaminase (Shigella flexneri serotype 5b (strain 8401)).